The primary structure comprises 247 residues: MNITPCSIKTLKGLYDISGVEVGQHFYWQIGGFQIHAQVLITSWFVITILLGSVIIAVRNPQTIPTDGQNFFEYVLEFIRDLSKTQIGEEYGPWVPFIGTMFLFIFVSNWSGALLPWKIIELPHGELAAPTNDINTTVALALLTSAAYFYAGLSKKGLSYFEKYIKPTPILLPINILEDFTKPLSLSFRLFGNILADELVVVVLVSLVPLVVPIPVMFLGLFTSGIQALIFATLAAAYIGESMEGHH.

The next 5 membrane-spanning stretches (helical) occupy residues 38 to 58 (QVLITSWFVITILLGSVIIAV), 95 to 115 (VPFIGTMFLFIFVSNWSGALL), 134 to 154 (INTTVALALLTSAAYFYAGLS), 199 to 219 (LVVVVLVSLVPLVVPIPVMFL), and 220 to 240 (GLFTSGIQALIFATLAAAYIG).

The protein belongs to the ATPase A chain family. In terms of assembly, F-type ATPases have 2 components, CF(1) - the catalytic core - and CF(0) - the membrane proton channel. CF(1) has five subunits: alpha(3), beta(3), gamma(1), delta(1), epsilon(1). CF(0) has four main subunits: a, b, b' and c.

The protein resides in the plastid. Its subcellular location is the chloroplast thylakoid membrane. In terms of biological role, key component of the proton channel; it plays a direct role in the translocation of protons across the membrane. The polypeptide is ATP synthase subunit a, chloroplastic (Sorghum bicolor (Sorghum)).